Here is a 181-residue protein sequence, read N- to C-terminus: Crossover junction endodeoxyribonuclease RuvC (181 aa).

Active-site residues include D7, E67, and D139. Mg(2+) is bound by residues D7, E67, and D139.

It belongs to the RuvC family. In terms of assembly, homodimer which binds Holliday junction (HJ) DNA. The HJ becomes 2-fold symmetrical on binding to RuvC with unstacked arms; it has a different conformation from HJ DNA in complex with RuvA. In the full resolvosome a probable DNA-RuvA(4)-RuvB(12)-RuvC(2) complex forms which resolves the HJ. The cofactor is Mg(2+).

It localises to the cytoplasm. The catalysed reaction is Endonucleolytic cleavage at a junction such as a reciprocal single-stranded crossover between two homologous DNA duplexes (Holliday junction).. The RuvA-RuvB-RuvC complex processes Holliday junction (HJ) DNA during genetic recombination and DNA repair. Endonuclease that resolves HJ intermediates. Cleaves cruciform DNA by making single-stranded nicks across the HJ at symmetrical positions within the homologous arms, yielding a 5'-phosphate and a 3'-hydroxyl group; requires a central core of homology in the junction. The consensus cleavage sequence is 5'-(A/T)TT(C/G)-3'. Cleavage occurs on the 3'-side of the TT dinucleotide at the point of strand exchange. HJ branch migration catalyzed by RuvA-RuvB allows RuvC to scan DNA until it finds its consensus sequence, where it cleaves and resolves the cruciform DNA. The chain is Crossover junction endodeoxyribonuclease RuvC from Cupriavidus taiwanensis (strain DSM 17343 / BCRC 17206 / CCUG 44338 / CIP 107171 / LMG 19424 / R1) (Ralstonia taiwanensis (strain LMG 19424)).